The chain runs to 901 residues: HTH-type transcriptional regulator MalT (901 aa).

39-46 (SPAGYGKT) contacts ATP. The 66-residue stretch at 829-894 (ELIRTSPLTQ…AAVQHAQKLL (66 aa)) folds into the HTH luxR-type domain. The segment at residues 853 to 872 (NEQIAGELEVAATTIKTHIR) is a DNA-binding region (H-T-H motif).

Belongs to the MalT family. As to quaternary structure, monomer in solution. Oligomerizes to an active state in the presence of the positive effectors ATP and maltotriose.

Its activity is regulated as follows. Activated by ATP and maltotriose, which are both required for DNA binding. Its function is as follows. Positively regulates the transcription of the maltose regulon whose gene products are responsible for uptake and catabolism of malto-oligosaccharides. Specifically binds to the promoter region of its target genes, recognizing a short DNA motif called the MalT box. This Escherichia coli O6:K15:H31 (strain 536 / UPEC) protein is HTH-type transcriptional regulator MalT.